The primary structure comprises 449 residues: Tubulin beta-2 chain (449 aa).

Glutamine 11 and glutamate 69 together coordinate GTP. Glutamate 69 provides a ligand contact to Mg(2+). Histidine 137 bears the Methylhistidine mark. GTP contacts are provided by serine 138, glycine 142, threonine 143, glycine 144, asparagine 204, and asparagine 226.

Belongs to the tubulin family. Dimer of alpha and beta chains. A typical microtubule is a hollow water-filled tube with an outer diameter of 25 nm and an inner diameter of 15 nM. Alpha-beta heterodimers associate head-to-tail to form protofilaments running lengthwise along the microtubule wall with the beta-tubulin subunit facing the microtubule plus end conferring a structural polarity. Microtubules usually have 13 protofilaments but different protofilament numbers can be found in some organisms and specialized cells. It depends on Mg(2+) as a cofactor.

The protein resides in the cytoplasm. It is found in the cytoskeleton. Its function is as follows. Tubulin is the major constituent of microtubules, a cylinder consisting of laterally associated linear protofilaments composed of alpha- and beta-tubulin heterodimers. Microtubules grow by the addition of GTP-tubulin dimers to the microtubule end, where a stabilizing cap forms. Below the cap, tubulin dimers are in GDP-bound state, owing to GTPase activity of alpha-tubulin. The sequence is that of Tubulin beta-2 chain (tubC) from Emericella nidulans (strain FGSC A4 / ATCC 38163 / CBS 112.46 / NRRL 194 / M139) (Aspergillus nidulans).